A 141-amino-acid polypeptide reads, in one-letter code: Hemoglobin subunit beta (141 aa).

In terms of domain architecture, Globin spans 2-141 (HWSEVELHEI…VVDAISKEYH (140 aa)). 2 residues coordinate heme b: His-58 and His-87.

This sequence belongs to the globin family. Heterotetramer of two alpha chains and two beta chains. In terms of tissue distribution, red blood cells.

Its function is as follows. Involved in oxygen transport from the lung to the various peripheral tissues. The sequence is that of Hemoglobin subunit beta (HBB) from Heterodontus portusjacksoni (Port Jackson shark).